A 534-amino-acid chain; its full sequence is Melanopsin-B (534 aa).

Topologically, residues Met1–Ser32 are extracellular. The chain crosses the membrane as a helical span at residues Phe33 to Tyr53. The Cytoplasmic portion of the chain corresponds to Arg54–Tyr64. The helical transmembrane segment at Phe65 to Phe85 threads the bilayer. Over Leu86–Val102 the chain is Extracellular. Residues Cys100 and Cys178 are joined by a disulfide bond. A helical transmembrane segment spans residues Tyr103–Ile123. The Cytoplasmic portion of the chain corresponds to Asn124 to Gln146. A helical membrane pass occupies residues Ile147–Ser167. Residues Ser168–Cys198 lie on the Extracellular side of the membrane. A glycan (N-linked (GlcNAc...) asparagine) is linked at Asn189. A helical transmembrane segment spans residues Cys199 to Ile219. At Arg220–Lys250 the chain is on the cytoplasmic side. Residues Ile251–Leu271 traverse the membrane as a helical segment. Over Ile272–Lys286 the chain is Extracellular. Residues Thr287 to Ile307 traverse the membrane as a helical segment. An N6-(retinylidene)lysine modification is found at Lys294. Residues His308–Ser534 lie on the Cytoplasmic side of the membrane. The tract at residues Ser478–Glu501 is disordered. Residues Glu482–Glu499 show a composition bias toward basic and acidic residues.

The protein belongs to the G-protein coupled receptor 1 family. Opsin subfamily. Highest level in the iris, high level in the inner nuclear layer, possibly in horizontal cells, and lowest level in retinal pigment epithelium. Expressed in melanophore cells of the skin.

The protein resides in the cell membrane. Its function is as follows. Photoreceptor implicated in non-image-forming responses to light. May be able to isomerize covalently bound all-trans retinal back to 11-cis retinal. This chain is Melanopsin-B, found in Xenopus laevis (African clawed frog).